The following is a 298-amino-acid chain: Transcription factor bHLH114 (298 aa).

Positions 117–149 (LDHEIRNHKSSKEQITQDYKNLTSKRSEELEEN) form a coiled coil. The segment at 126–154 (SSKEQITQDYKNLTSKRSEELEENSDEYS) is disordered. Over residues 129-140 (EQITQDYKNLTS) the composition is skewed to polar residues. In terms of domain architecture, bHLH spans 163 to 212 (LETLSPLPSFKVRKEKLGDRITALQQLVSPFGKTDTASVLNEAVEYIKFL).

Homodimer. Differentiating root endodermis.

It is found in the nucleus. This Arabidopsis thaliana (Mouse-ear cress) protein is Transcription factor bHLH114 (BHLH114).